The sequence spans 269 residues: UPF0494 membrane protein C1348.01 (269 aa).

4 helical membrane-spanning segments follow: residues 107–127, 144–164, 177–197, and 201–221; these read WPLL…KFEV, IWVP…SLIF, GVII…IAAL, and ITGL…LSLG.

Belongs to the UPF0494 family.

It is found in the vacuole membrane. The protein is UPF0494 membrane protein C1348.01 of Schizosaccharomyces pombe (strain 972 / ATCC 24843) (Fission yeast).